The sequence spans 126 residues: Large ribosomal subunit protein bL12 (126 aa).

It belongs to the bacterial ribosomal protein bL12 family. As to quaternary structure, homodimer. Part of the ribosomal stalk of the 50S ribosomal subunit. Forms a multimeric L10(L12)X complex, where L10 forms an elongated spine to which 2 to 4 L12 dimers bind in a sequential fashion. Binds GTP-bound translation factors.

In terms of biological role, forms part of the ribosomal stalk which helps the ribosome interact with GTP-bound translation factors. Is thus essential for accurate translation. This chain is Large ribosomal subunit protein bL12, found in Desulforudis audaxviator (strain MP104C).